We begin with the raw amino-acid sequence, 525 residues long: uncharacterized protein (525 aa).

2 helical membrane passes run 28–48 (FIDV…NLII) and 353–373 (GVNA…LFTP). One can recognise a Pterin-binding domain in the interval 146 to 394 (DIKIGKLKVG…ELKIASKMMF (249 aa)).

It localises to the cell membrane. Its function is as follows. Unknown. Does not possess dihydropteroate synthase (DHPS) activity since it does not catalyze the condensation of 6-hydroxymethyl-7,8-dihydropterin pyrophosphate (DHPP) and 4-aminobenzoate to form 7,8-dihydropteroate. This is an uncharacterized protein from Methanocaldococcus jannaschii (strain ATCC 43067 / DSM 2661 / JAL-1 / JCM 10045 / NBRC 100440) (Methanococcus jannaschii).